The sequence spans 158 residues: Phosphopantetheine adenylyltransferase (158 aa).

A substrate-binding site is contributed by Thr-10. ATP is bound by residues 10-11 (TF) and His-18. 3 residues coordinate substrate: Lys-42, Leu-74, and Arg-88. Residues 89–91 (GIR), Glu-99, and 124–130 (WRYLSST) contribute to the ATP site.

It belongs to the bacterial CoaD family. Homohexamer. It depends on Mg(2+) as a cofactor.

It is found in the cytoplasm. It carries out the reaction (R)-4'-phosphopantetheine + ATP + H(+) = 3'-dephospho-CoA + diphosphate. The protein operates within cofactor biosynthesis; coenzyme A biosynthesis; CoA from (R)-pantothenate: step 4/5. Its function is as follows. Reversibly transfers an adenylyl group from ATP to 4'-phosphopantetheine, yielding dephospho-CoA (dPCoA) and pyrophosphate. This is Phosphopantetheine adenylyltransferase from Actinobacillus pleuropneumoniae serotype 3 (strain JL03).